The primary structure comprises 544 residues: Chaperonin GroEL 1 (544 aa).

Residues 29–32 (TLGP), 86–90 (DGTTT), Gly413, 476–478 (NAA), and Asp492 contribute to the ATP site. A disordered region spans residues 523-544 (EPVKAPAGGGDMDGMGGMGGMM). A compositionally biased stretch (gly residues) spans 529–544 (AGGGDMDGMGGMGGMM).

The protein belongs to the chaperonin (HSP60) family. As to quaternary structure, forms a cylinder of 14 subunits composed of two heptameric rings stacked back-to-back. Interacts with the co-chaperonin GroES.

Its subcellular location is the cytoplasm. The catalysed reaction is ATP + H2O + a folded polypeptide = ADP + phosphate + an unfolded polypeptide.. Functionally, together with its co-chaperonin GroES, plays an essential role in assisting protein folding. The GroEL-GroES system forms a nano-cage that allows encapsulation of the non-native substrate proteins and provides a physical environment optimized to promote and accelerate protein folding. The chain is Chaperonin GroEL 1 from Cutibacterium acnes (strain DSM 16379 / KPA171202) (Propionibacterium acnes).